Here is a 148-residue protein sequence, read N- to C-terminus: MSIIDNRKAHFDYHIEERYEAGLVLEGWEVKALRAGRGQIREGYVVIKHDEIFLIGTHISPLPEASTHITPDPVRTRKLLLHREEIKKLIGKVEQRGYTLVPLNFHYKGGRVKCDIALAKGKKLHDKRETEKKRDWEREKARIMRAGT.

Residues 129 to 142 are compositionally biased toward basic and acidic residues; the sequence is ETEKKRDWEREKAR. Positions 129–148 are disordered; sequence ETEKKRDWEREKARIMRAGT.

This sequence belongs to the SmpB family.

It localises to the cytoplasm. In terms of biological role, required for rescue of stalled ribosomes mediated by trans-translation. Binds to transfer-messenger RNA (tmRNA), required for stable association of tmRNA with ribosomes. tmRNA and SmpB together mimic tRNA shape, replacing the anticodon stem-loop with SmpB. tmRNA is encoded by the ssrA gene; the 2 termini fold to resemble tRNA(Ala) and it encodes a 'tag peptide', a short internal open reading frame. During trans-translation Ala-aminoacylated tmRNA acts like a tRNA, entering the A-site of stalled ribosomes, displacing the stalled mRNA. The ribosome then switches to translate the ORF on the tmRNA; the nascent peptide is terminated with the 'tag peptide' encoded by the tmRNA and targeted for degradation. The ribosome is freed to recommence translation, which seems to be the essential function of trans-translation. This is SsrA-binding protein from Burkholderia lata (strain ATCC 17760 / DSM 23089 / LMG 22485 / NCIMB 9086 / R18194 / 383).